The primary structure comprises 253 residues: Triosephosphate isomerase (253 aa).

Position 9–11 (9–11 (NWK)) interacts with substrate. H94 (electrophile) is an active-site residue. E163 acts as the Proton acceptor in catalysis. Substrate is bound by residues G169, S209, and 230–231 (GG).

The protein belongs to the triosephosphate isomerase family. As to quaternary structure, homodimer.

It is found in the cytoplasm. It carries out the reaction D-glyceraldehyde 3-phosphate = dihydroxyacetone phosphate. Its pathway is carbohydrate biosynthesis; gluconeogenesis. It participates in carbohydrate degradation; glycolysis; D-glyceraldehyde 3-phosphate from glycerone phosphate: step 1/1. In terms of biological role, involved in the gluconeogenesis. Catalyzes stereospecifically the conversion of dihydroxyacetone phosphate (DHAP) to D-glyceraldehyde-3-phosphate (G3P). The sequence is that of Triosephosphate isomerase from Dehalococcoides mccartyi (strain ATCC BAA-2100 / JCM 16839 / KCTC 5957 / BAV1).